A 267-amino-acid polypeptide reads, in one-letter code: Glutamate 5-kinase (267 aa).

Lysine 15 contacts ATP. Substrate contacts are provided by serine 55, aspartate 142, and asparagine 158. ATP contacts are provided by residues 178-179 (SD) and 220-226 (TGGMATK).

It belongs to the glutamate 5-kinase family.

The protein resides in the cytoplasm. The catalysed reaction is L-glutamate + ATP = L-glutamyl 5-phosphate + ADP. It participates in amino-acid biosynthesis; L-proline biosynthesis; L-glutamate 5-semialdehyde from L-glutamate: step 1/2. Functionally, catalyzes the transfer of a phosphate group to glutamate to form L-glutamate 5-phosphate. This Ligilactobacillus salivarius (strain UCC118) (Lactobacillus salivarius) protein is Glutamate 5-kinase.